A 337-amino-acid polypeptide reads, in one-letter code: WRKY transcription factor 23 (337 aa).

The segment at Ile100–Ala160 is disordered. The span at Pro106–Ala118 shows a compositional bias: low complexity. Positions His142 to Lys155 are enriched in basic residues. The segment at residues Ser168–Pro233 is a DNA-binding region (WRKY).

The protein belongs to the WRKY group II-c family.

It is found in the nucleus. Functionally, transcription factor. Interacts specifically with the W box (5'-(T)TGAC[CT]-3'), a frequently occurring elicitor-responsive cis-acting element. This Arabidopsis thaliana (Mouse-ear cress) protein is WRKY transcription factor 23 (WRKY23).